A 101-amino-acid polypeptide reads, in one-letter code: Co-chaperonin GroES 1 (101 aa).

Belongs to the GroES chaperonin family. In terms of assembly, heptamer of 7 subunits arranged in a ring. Interacts with the chaperonin GroEL.

The protein resides in the cytoplasm. In terms of biological role, together with the chaperonin GroEL, plays an essential role in assisting protein folding. The GroEL-GroES system forms a nano-cage that allows encapsulation of the non-native substrate proteins and provides a physical environment optimized to promote and accelerate protein folding. GroES binds to the apical surface of the GroEL ring, thereby capping the opening of the GroEL channel. This is Co-chaperonin GroES 1 from Rhodopirellula baltica (strain DSM 10527 / NCIMB 13988 / SH1).